A 293-amino-acid chain; its full sequence is Ribosomal protein L11 methyltransferase (293 aa).

Residues threonine 145, glycine 166, aspartate 188, and asparagine 230 each contribute to the S-adenosyl-L-methionine site.

This sequence belongs to the methyltransferase superfamily. PrmA family.

It localises to the cytoplasm. The enzyme catalyses L-lysyl-[protein] + 3 S-adenosyl-L-methionine = N(6),N(6),N(6)-trimethyl-L-lysyl-[protein] + 3 S-adenosyl-L-homocysteine + 3 H(+). In terms of biological role, methylates ribosomal protein L11. The protein is Ribosomal protein L11 methyltransferase of Serratia proteamaculans (strain 568).